A 354-amino-acid chain; its full sequence is Polyprenal reductase 1 (354 aa).

The next 6 helical transmembrane spans lie at 11-31, 78-98, 141-158, 176-196, 235-255, and 301-321; these read PLLCLAWIATTLPIIVAALPI, FMHFYVVGVLATTILLLAIWF, YHVWRTVFVLLLMEIQVL, MHIVGYLTGLFYYVAAPLSLA, PLLKLGWTQWIGAVIFIWGSL, and GMLVASGGEDIPVWFLFVFVI.

This sequence belongs to the steroid 5-alpha reductase family. Polyprenal reductase subfamily.

Its subcellular location is the cell membrane. The enzyme catalyses a di-trans,poly-cis-dolichal + NADP(+) = a di-trans,poly-cis-polyprenal + NADPH + H(+). It functions in the pathway protein modification; protein glycosylation. Plays a key role in early steps of protein N-linked glycosylation by being involved in the conversion of polyprenol into dolichol. Acts as a polyprenal reductase that mediates the reduction of polyprenal into dolichal in a NADP-dependent mechanism. Dolichols are required for the synthesis of dolichol-linked monosaccharides and the oligosaccharide precursor used for N-glycosylation. The sequence is that of Polyprenal reductase 1 from Oryza sativa subsp. indica (Rice).